Here is a 571-residue protein sequence, read N- to C-terminus: Proline--tRNA ligase (571 aa).

The protein belongs to the class-II aminoacyl-tRNA synthetase family. ProS type 1 subfamily. In terms of assembly, homodimer.

Its subcellular location is the cytoplasm. The catalysed reaction is tRNA(Pro) + L-proline + ATP = L-prolyl-tRNA(Pro) + AMP + diphosphate. Functionally, catalyzes the attachment of proline to tRNA(Pro) in a two-step reaction: proline is first activated by ATP to form Pro-AMP and then transferred to the acceptor end of tRNA(Pro). As ProRS can inadvertently accommodate and process non-cognate amino acids such as alanine and cysteine, to avoid such errors it has two additional distinct editing activities against alanine. One activity is designated as 'pretransfer' editing and involves the tRNA(Pro)-independent hydrolysis of activated Ala-AMP. The other activity is designated 'posttransfer' editing and involves deacylation of mischarged Ala-tRNA(Pro). The misacylated Cys-tRNA(Pro) is not edited by ProRS. This Aliivibrio salmonicida (strain LFI1238) (Vibrio salmonicida (strain LFI1238)) protein is Proline--tRNA ligase.